Reading from the N-terminus, the 1000-residue chain is MPLRLDVKRKLLARSDRVKCVDLHPVETWLLAALYNGNVHIWNYETQTLVKSFEVCDVPVRAAKFVPRKSWVVTGSDDMHIRVFNYNTLERVHQFEAHSDYLRSLVVHPTLPYVISSSDDMLVKMWDWDNKWAMKQSFEGHTHYVMQIAINPKDNNTFATASLDKTVKVWQFGSNVPNFTLEGHEKGVNCVDYYHGGEKPYIISGADDHLVKIWDYQNKTCVQTLDGHAQNVSSVCFHPELPLIITGSEDSTVRLWHANTYRLETTLNYGLERVWCIQAQKGANTIAIGYDEGSVTLKLGREEPAVSMDSSGKILWAKHSEIQQANLKTISTEESEAIQDGERLPLSVKDLGSSEIYPQTLAHSSNGRFVVACGDGEYIVYTAMALRNKDFGQGLEFVWAVDPNMFAVRESATNVKIKKNFKDHKSIRSDMVLEGISGGPLLALRSNNSLCFFDWESAVLVRRIEITSKSIYWSDNGEMVAICGDDSFYVLKYSAEAVANATEVTEDGIEDAFEVIGEQAEAVKTGFWIGDCFIFTTALNRINYYVGGEIVTIAHVDRPLYLLGYMAKESRVYAVDKDLNVISYKLLLSVLEYQTAVMRRDFDTADKVLTTIPKEQRTRVAHFLEKQGFKKQALAVSQDPDHKFDLSVALGDLKTAYDLALQSDSEEKWKALSNAATLKSELLLAGECLGRARDFGGLMLLATCAGSAPLLQKLADDSAAAESHNISFLSSLLLGDIDACLDKLISTGRLPEAAFLARTHAPSRVSSILELWKAKASGHSEKSSRKIGESLADPVKYENLFPGFTQSLKAESFVREISKIPVPASVRVPSAATRNIQEELDEAVASGAVSFTDDGQAVLKNAPRQTETQLKAPPPPSVARQPSPVRQPSPIREPSPIREPEPEEEEEQEEFDDDQQEVHVPANQESADAHGTSKTPDVVLETSRPDIVPPRGSAAPDLVSASSQQSAQDFQDDTQWSDEDFGDAENGDLNMDDLNLDEED.

WD repeat units follow at residues 13 to 52, 55 to 94, 97 to 136, 140 to 180, 183 to 224, 227 to 266, and 351 to 391; these read ARSD…LVKS, VCDV…RVHQ, AHSD…AMKQ, GHTH…PNFT, GHEK…CVQT, GHAQ…LETT, and LGSS…NKDF. Residues 863-1000 are disordered; it reads PRQTETQLKA…MDDLNLDEED (138 aa). The segment covering 901–915 has biased composition (acidic residues); the sequence is EPEEEEEQEEFDDDQ. A compositionally biased stretch (low complexity) spans 960–969; it reads SASSQQSAQD. Over residues 970 to 1000 the composition is skewed to acidic residues; the sequence is FQDDTQWSDEDFGDAENGDLNMDDLNLDEED.

This sequence belongs to the WD repeat COPB2 family. As to quaternary structure, oligomeric complex that consists of at least the alpha, beta, beta', gamma, delta, epsilon and zeta subunits.

The protein localises to the cytoplasm. Its subcellular location is the golgi apparatus membrane. The protein resides in the cytoplasmic vesicle. It localises to the COPI-coated vesicle membrane. The coatomer is a cytosolic protein complex that binds to dilysine motifs and reversibly associates with Golgi non-clathrin-coated vesicles, which further mediate biosynthetic protein transport from the ER, via the Golgi up to the trans Golgi network. Coatomer complex is required for budding from Golgi membranes, and is essential for the retrograde Golgi-to-ER transport of dilysine-tagged proteins. The chain is Probable coatomer subunit beta' (copb-2) from Caenorhabditis elegans.